Consider the following 296-residue polypeptide: Nitrogenase iron protein (296 aa).

Residue 12 to 19 (GKGGIGKS) participates in ATP binding. Residue Cys100 participates in [4Fe-4S] cluster binding. Arg103 carries the post-translational modification ADP-ribosylarginine; by dinitrogenase reductase ADP-ribosyltransferase. Residue Cys134 participates in [4Fe-4S] cluster binding.

The protein belongs to the NifH/BchL/ChlL family. In terms of assembly, homodimer. [4Fe-4S] cluster serves as cofactor. Post-translationally, the reversible ADP-ribosylation of Arg-103 inactivates the nitrogenase reductase and regulates nitrogenase activity.

The enzyme catalyses N2 + 8 reduced [2Fe-2S]-[ferredoxin] + 16 ATP + 16 H2O = H2 + 8 oxidized [2Fe-2S]-[ferredoxin] + 2 NH4(+) + 16 ADP + 16 phosphate + 6 H(+). Functionally, the key enzymatic reactions in nitrogen fixation are catalyzed by the nitrogenase complex, which has 2 components: the iron protein and the molybdenum-iron protein. The sequence is that of Nitrogenase iron protein from Acidithiobacillus ferrooxidans (strain ATCC 23270 / DSM 14882 / CIP 104768 / NCIMB 8455) (Ferrobacillus ferrooxidans (strain ATCC 23270)).